Consider the following 185-residue polypeptide: Elongation factor P (185 aa).

It belongs to the elongation factor P family.

It is found in the cytoplasm. The protein operates within protein biosynthesis; polypeptide chain elongation. In terms of biological role, involved in peptide bond synthesis. Stimulates efficient translation and peptide-bond synthesis on native or reconstituted 70S ribosomes in vitro. Probably functions indirectly by altering the affinity of the ribosome for aminoacyl-tRNA, thus increasing their reactivity as acceptors for peptidyl transferase. This is Elongation factor P from Clostridioides difficile (strain 630) (Peptoclostridium difficile).